The primary structure comprises 479 residues: Aspartyl/glutamyl-tRNA(Asn/Gln) amidotransferase subunit B (479 aa).

The protein belongs to the GatB/GatE family. GatB subfamily. As to quaternary structure, heterotrimer of A, B and C subunits.

It catalyses the reaction L-glutamyl-tRNA(Gln) + L-glutamine + ATP + H2O = L-glutaminyl-tRNA(Gln) + L-glutamate + ADP + phosphate + H(+). The enzyme catalyses L-aspartyl-tRNA(Asn) + L-glutamine + ATP + H2O = L-asparaginyl-tRNA(Asn) + L-glutamate + ADP + phosphate + 2 H(+). Its function is as follows. Allows the formation of correctly charged Asn-tRNA(Asn) or Gln-tRNA(Gln) through the transamidation of misacylated Asp-tRNA(Asn) or Glu-tRNA(Gln) in organisms which lack either or both of asparaginyl-tRNA or glutaminyl-tRNA synthetases. The reaction takes place in the presence of glutamine and ATP through an activated phospho-Asp-tRNA(Asn) or phospho-Glu-tRNA(Gln). This is Aspartyl/glutamyl-tRNA(Asn/Gln) amidotransferase subunit B from Streptococcus uberis (strain ATCC BAA-854 / 0140J).